Consider the following 263-residue polypeptide: Syntaxin pep12 (263 aa).

The interval 140-159 (RNVSLSNNSSGQRQPLTESK) is disordered. Positions 142–159 (VSLSNNSSGQRQPLTESK) are enriched in polar residues. Phosphoserine occurs at positions 148 and 163. The region spanning 169–231 (QRLINERQGE…KNASRQLQIA (63 aa)) is the t-SNARE coiled-coil homology domain.

It belongs to the syntaxin family.

It is found in the endoplasmic reticulum. Has a role in vesicle-mediated transport but not with protein transport from Golgi to vesicle. This is Syntaxin pep12 (pep12) from Schizosaccharomyces pombe (strain 972 / ATCC 24843) (Fission yeast).